The following is a 1058-amino-acid chain: COP1-interacting protein 7 (1058 aa).

Disordered regions lie at residues L123–V147, H262–R281, and M330–N463. 2 stretches are compositionally biased toward polar residues: residues T126–S136 and H262–T276. Residues S340–K347 carry the Nuclear localization signal 1 motif. A compositionally biased stretch (basic residues) spans S340–S353. The span at D403 to V414 shows a compositional bias: acidic residues. The Nuclear localization signal 2 motif lies at E431–S438. Basic residues predominate over residues R432–S446. Positions H447 to D462 are enriched in basic and acidic residues. At S477 the chain carries Phosphoserine. Positions A708–S887 are disordered. Positions S757–L773 are enriched in basic and acidic residues. The Nuclear localization signal 3 signature appears at E764–E771. Residues K783–S808 are compositionally biased toward low complexity. 2 stretches are compositionally biased toward basic and acidic residues: residues K860–S869 and K878–S887. 3 positions are modified to phosphoserine: S915, S986, and S992. The disordered stretch occupies residues S1020–P1041. The segment covering E1026–S1040 has biased composition (basic and acidic residues).

As to quaternary structure, interacts with COP1.

The protein resides in the nucleus. In terms of biological role, exhibits transcriptional activation activity. Positive regulator of light-regulated genes, probably being a direct downstream target of COP1 for mediating light control of gene expression. This chain is COP1-interacting protein 7, found in Arabidopsis thaliana (Mouse-ear cress).